The following is a 179-amino-acid chain: Large ribosomal subunit protein uL5 (179 aa).

It belongs to the universal ribosomal protein uL5 family. As to quaternary structure, part of the 50S ribosomal subunit; part of the 5S rRNA/L5/L18/L25 subcomplex. Contacts the 5S rRNA and the P site tRNA. Forms a bridge to the 30S subunit in the 70S ribosome.

In terms of biological role, this is one of the proteins that bind and probably mediate the attachment of the 5S RNA into the large ribosomal subunit, where it forms part of the central protuberance. In the 70S ribosome it contacts protein S13 of the 30S subunit (bridge B1b), connecting the 2 subunits; this bridge is implicated in subunit movement. Contacts the P site tRNA; the 5S rRNA and some of its associated proteins might help stabilize positioning of ribosome-bound tRNAs. The protein is Large ribosomal subunit protein uL5 of Bacillus anthracis (strain A0248).